Reading from the N-terminus, the 385-residue chain is Flap endonuclease 1 (385 aa).

The interval 1-104 (MGILGLSKLI…GELAKRAERR (104 aa)) is N-domain. Aspartate 34 contacts Mg(2+). DNA contacts are provided by arginine 47 and arginine 70. The Mg(2+) site is built by aspartate 86, glutamate 158, glutamate 160, aspartate 179, and aspartate 181. The tract at residues 122 to 253 (GIEKFNRRLV…KRAIELINTY (132 aa)) is I-domain. Glutamate 158 lines the DNA pocket. 2 residues coordinate DNA: glycine 231 and aspartate 233. Aspartate 233 lines the Mg(2+) pocket. Residues 336–344 (TQVRLDSFF) are interaction with PCNA. The interval 346 to 385 (TLPSTPNATNAAKRKAEEAKKSANNKKAKTSGGGRGRRPK) is disordered. Positions 368–385 (ANNKKAKTSGGGRGRRPK) are enriched in basic residues.

This sequence belongs to the XPG/RAD2 endonuclease family. FEN1 subfamily. In terms of assembly, interacts with PCNA. Three molecules of FEN1 bind to one PCNA trimer with each molecule binding to one PCNA monomer. PCNA stimulates the nuclease activity without altering cleavage specificity. The cofactor is Mg(2+). Phosphorylated. Phosphorylation upon DNA damage induces relocalization to the nuclear plasma.

The protein localises to the nucleus. The protein resides in the nucleolus. It is found in the nucleoplasm. Its subcellular location is the mitochondrion. Functionally, structure-specific nuclease with 5'-flap endonuclease and 5'-3' exonuclease activities involved in DNA replication and repair. During DNA replication, cleaves the 5'-overhanging flap structure that is generated by displacement synthesis when DNA polymerase encounters the 5'-end of a downstream Okazaki fragment. It enters the flap from the 5'-end and then tracks to cleave the flap base, leaving a nick for ligation. Also involved in the long patch base excision repair (LP-BER) pathway, by cleaving within the apurinic/apyrimidinic (AP) site-terminated flap. Acts as a genome stabilization factor that prevents flaps from equilibrating into structures that lead to duplications and deletions. Also possesses 5'-3' exonuclease activity on nicked or gapped double-stranded DNA, and exhibits RNase H activity. Also involved in replication and repair of rDNA and in repairing mitochondrial DNA. This is Flap endonuclease 1 from Drosophila simulans (Fruit fly).